Reading from the N-terminus, the 187-residue chain is GTP cyclohydrolase 1 (187 aa).

Cys-79, His-82, and Cys-150 together coordinate Zn(2+).

It belongs to the GTP cyclohydrolase I family. As to quaternary structure, toroid-shaped homodecamer, composed of two pentamers of five dimers.

The catalysed reaction is GTP + H2O = 7,8-dihydroneopterin 3'-triphosphate + formate + H(+). The protein operates within cofactor biosynthesis; 7,8-dihydroneopterin triphosphate biosynthesis; 7,8-dihydroneopterin triphosphate from GTP: step 1/1. The sequence is that of GTP cyclohydrolase 1 from Fusobacterium nucleatum subsp. nucleatum (strain ATCC 25586 / DSM 15643 / BCRC 10681 / CIP 101130 / JCM 8532 / KCTC 2640 / LMG 13131 / VPI 4355).